The primary structure comprises 88 residues: Stannin (88 aa).

Residues 1–10 (MSIMDHSPTT) lie on the Mitochondrial intermembrane side of the membrane. A helical membrane pass occupies residues 11-31 (GVVTVIVILIAIAALGALILG). The Cytoplasmic segment spans residues 32–88 (CWCYLRLQRISQSEDEESIVGDGETKEPFLLVQYSAKGPCVERKAKLMTANSPEVHG). A phosphoserine mark is found at serine 49 and serine 83.

It belongs to the stannin family. As to quaternary structure, monomer.

It is found in the mitochondrion outer membrane. Its function is as follows. Plays a role in the toxic effects of organotins. Plays a role in endosomal maturation. In Mus musculus (Mouse), this protein is Stannin (Snn).